The sequence spans 345 residues: NADH-ubiquinone oxidoreductase chain 2 (345 aa).

9 consecutive transmembrane segments (helical) span residues 1-21 (MNPIINFILLFSMMAGTILAM), 25-45 (HWVYAWLGLELNTLAIIPIIS), 60-80 (FLIQAISSALFLLSGITNAYL), 113-133 (FWLPEVLQGVPILTALIIATW), 148-168 (LIPTPITLTMGLLSTIIGGLG), 191-211 (VIIITIAPNLTLLNLTLYMIF), 239-259 (IITSLFLLSLLSLGGLPPMSG), 274-294 (HLTPLALSMALMALLSLMFYL), and 324-344 (SSLSMLTPPSLLILPIMPLLI).

Belongs to the complex I subunit 2 family.

It localises to the mitochondrion inner membrane. The catalysed reaction is a ubiquinone + NADH + 5 H(+)(in) = a ubiquinol + NAD(+) + 4 H(+)(out). Its function is as follows. Core subunit of the mitochondrial membrane respiratory chain NADH dehydrogenase (Complex I) that is believed to belong to the minimal assembly required for catalysis. Complex I functions in the transfer of electrons from NADH to the respiratory chain. The immediate electron acceptor for the enzyme is believed to be ubiquinone. The polypeptide is NADH-ubiquinone oxidoreductase chain 2 (MT-ND2) (Varanus baritji (Black-spotted ridge-tailed monitor)).